A 330-amino-acid polypeptide reads, in one-letter code: Probable WRKY transcription factor 74 (330 aa).

Positions 256–322 form a DNA-binding region, WRKY; sequence KIADIPPDEY…YEGEHNHSRI (67 aa).

Its subcellular location is the nucleus. Transcription factor. Interacts specifically with the W box (5'-(T)TGAC[CT]-3'), a frequently occurring elicitor-responsive cis-acting element. This is Probable WRKY transcription factor 74 (WRKY74) from Arabidopsis thaliana (Mouse-ear cress).